We begin with the raw amino-acid sequence, 77 residues long: U8-lycotoxin-Ls1n (77 aa).

Residues M1–A20 form the signal peptide. Residues Q21 to K26 constitute a propeptide that is removed on maturation.

The protein belongs to the neurotoxin 19 (CSTX) family. 08 (U8-Lctx) subfamily. Contains 4 disulfide bonds. As to expression, expressed by the venom gland.

Its subcellular location is the secreted. This Lycosa singoriensis (Wolf spider) protein is U8-lycotoxin-Ls1n.